The sequence spans 239 residues: Large ribosomal subunit protein uL1 (239 aa).

Belongs to the universal ribosomal protein uL1 family. As to quaternary structure, part of the 50S ribosomal subunit.

Functionally, binds directly to 23S rRNA. The L1 stalk is quite mobile in the ribosome, and is involved in E site tRNA release. In terms of biological role, protein L1 is also a translational repressor protein, it controls the translation of the L11 operon by binding to its mRNA. This chain is Large ribosomal subunit protein uL1, found in Rickettsia canadensis (strain McKiel).